Here is a 247-residue protein sequence, read N- to C-terminus: 2,3-bisphosphoglycerate-dependent phosphoglycerate mutase (247 aa).

Residues 8–15 (RHGESTWN), 21–22 (TG), arginine 60, 87–90 (ERHY), lysine 98, 114–115 (RR), and 183–184 (GN) contribute to the substrate site. Catalysis depends on histidine 9, which acts as the Tele-phosphohistidine intermediate. The active-site Proton donor/acceptor is glutamate 87.

It belongs to the phosphoglycerate mutase family. BPG-dependent PGAM subfamily. Homodimer.

It catalyses the reaction (2R)-2-phosphoglycerate = (2R)-3-phosphoglycerate. It participates in carbohydrate degradation; glycolysis; pyruvate from D-glyceraldehyde 3-phosphate: step 3/5. In terms of biological role, catalyzes the interconversion of 2-phosphoglycerate and 3-phosphoglycerate. This chain is 2,3-bisphosphoglycerate-dependent phosphoglycerate mutase, found in Acidovorax ebreus (strain TPSY) (Diaphorobacter sp. (strain TPSY)).